Consider the following 126-residue polypeptide: Protein ApaG (126 aa).

In terms of domain architecture, ApaG spans 2–126 (SQLTSSVRVD…FRLSIPGLLH (125 aa)).

In Shewanella halifaxensis (strain HAW-EB4), this protein is Protein ApaG.